Here is a 530-residue protein sequence, read N- to C-terminus: Alkali-sensitive linkage protein 1 (530 aa).

Positions 1-18 are cleaved as a signal peptide; the sequence is MRTTFATVALAFLSTVGA. An N-linked (GlcNAc...) asparagine glycan is attached at Asn-55. Residues 69–90 form a disordered region; sequence SVTESSDDGASTALPTTSTESV. N-linked (GlcNAc...) asparagine glycosylation is found at Asn-120 and Asn-128.

It localises to the endoplasmic reticulum. Its subcellular location is the golgi apparatus. The protein localises to the secreted. The protein resides in the cell wall. The protein is Alkali-sensitive linkage protein 1 (asl1) of Schizosaccharomyces pombe (strain 972 / ATCC 24843) (Fission yeast).